Consider the following 544-residue polypeptide: Chaperonin GroEL (544 aa).

Residues 30-33 (TLGP), lysine 51, 87-91 (DGTTT), glycine 415, 479-481 (NAA), and aspartate 495 contribute to the ATP site. Residues 525–537 (PQDTPATAAAPDM) show a composition bias toward low complexity. The segment at 525–544 (PQDTPATAAAPDMGGMGGMM) is disordered.

Belongs to the chaperonin (HSP60) family. Forms a cylinder of 14 subunits composed of two heptameric rings stacked back-to-back. Interacts with the co-chaperonin GroES.

The protein resides in the cytoplasm. It carries out the reaction ATP + H2O + a folded polypeptide = ADP + phosphate + an unfolded polypeptide.. Its function is as follows. Together with its co-chaperonin GroES, plays an essential role in assisting protein folding. The GroEL-GroES system forms a nano-cage that allows encapsulation of the non-native substrate proteins and provides a physical environment optimized to promote and accelerate protein folding. This Ruthia magnifica subsp. Calyptogena magnifica protein is Chaperonin GroEL.